Reading from the N-terminus, the 362-residue chain is Lactosylceramide alpha-2,3-sialyltransferase (362 aa).

Topologically, residues Met-1 to Ser-5 are cytoplasmic. The helical; Signal-anchor for type II membrane protein transmembrane segment at Leu-6 to Ile-26 threads the bilayer. Residues Leu-27–Phe-362 are Lumenal-facing. 4 N-linked (GlcNAc...) asparagine glycosylation sites follow: Asn-30, Asn-180, Asn-224, and Asn-334. A disulfide bridge links Cys-139 with Cys-297.

The protein belongs to the glycosyltransferase 29 family.

It is found in the golgi apparatus membrane. It catalyses the reaction a beta-D-Gal-(1-&gt;4)-beta-D-Glc-(1&lt;-&gt;1)-Cer(d18:1(4E)) + CMP-N-acetyl-beta-neuraminate = a ganglioside GM3 (d18:1(4E)) + CMP + H(+). The enzyme catalyses ganglioside GA2 (d18:1(4E)/18:0) + CMP-N-acetyl-beta-neuraminate = ganglioside GM2 (d18:1(4E)/18:0) + CMP + H(+). The catalysed reaction is a beta-D-Gal-(1&lt;-&gt;1')-ceramide + CMP-N-acetyl-beta-neuraminate = N-acetyl-alpha-neuraminosyl-(2-&gt;3)-beta-D-galactosyl-(1&lt;-&gt;1')-ceramide + CMP + H(+). It carries out the reaction ganglioside GA1 (d18:1(4E)/18:0) + CMP-N-acetyl-beta-neuraminate = ganglioside GM1 (d18:1(4E)/18:0) + CMP + H(+). In terms of biological role, transfers the sialyl group (N-acetyl-alpha-neuraminyl or NeuAc) from CMP-NeuAc to the non-reducing terminal galactose (Gal) of glycosphingolipids forming gangliosides (important molecules involved in the regulation of multiple cellular processes, including cell proliferation and differentiation, apoptosis, embryogenesis, development, and oncogenesis). Mainly involved in the biosynthesis of ganglioside GM3 but can also use different glycolipids as substrate acceptors such as D-galactosylceramide (GalCer), asialo-GM2 (GA2) and asialo-GM1 (GA1), although less preferentially than beta-D-Gal-(1-&gt;4)-beta-D-Glc-(1&lt;-&gt;1)-Cer (LacCer). This chain is Lactosylceramide alpha-2,3-sialyltransferase (ST3GAL5), found in Pan troglodytes (Chimpanzee).